Consider the following 188-residue polypeptide: Elongation factor P (188 aa).

N6-(3,6-diaminohexanoyl)-5-hydroxylysine is present on lysine 34.

It belongs to the elongation factor P family. In terms of processing, may be beta-lysylated on the epsilon-amino group of Lys-34 by the combined action of EpmA and EpmB, and then hydroxylated on the C5 position of the same residue by EpmC (if this protein is present). Lysylation is critical for the stimulatory effect of EF-P on peptide-bond formation. The lysylation moiety may extend toward the peptidyltransferase center and stabilize the terminal 3-CCA end of the tRNA. Hydroxylation of the C5 position on Lys-34 may allow additional potential stabilizing hydrogen-bond interactions with the P-tRNA.

Its subcellular location is the cytoplasm. Its pathway is protein biosynthesis; polypeptide chain elongation. In terms of biological role, involved in peptide bond synthesis. Alleviates ribosome stalling that occurs when 3 or more consecutive Pro residues or the sequence PPG is present in a protein, possibly by augmenting the peptidyl transferase activity of the ribosome. Modification of Lys-34 is required for alleviation. The chain is Elongation factor P from Vibrio atlanticus (strain LGP32) (Vibrio splendidus (strain Mel32)).